A 704-amino-acid chain; its full sequence is MAQDVLTDLNKVRNIGIMAHIDAGKTTTTERILFYTGVNHKIGETHDGASTTDWMEQEKERGITITSAAVTCFWDKNQINIIDTPGHVDFTVEVERSLRVLDGAVAVFDGKEGVEPQSETVWRQADKYNVPRICFVNKMDKLGADFYFTVDTIISRLGAKPLVMQLPIGAENDFIGVVDLLEMRALVWPGDAKGDVTMGASYEVQEIPADLQAKAEEYRAQLVETVAEASEELMEKYLEGEELTLEEIKAGIRKMTINSELYPVFCGSAFKNRGVQPMLDAVVDFLPNPLDVPPMIGHDPRDEEKELTRKPSADEPFSALAFKIAAHPFFGQLTFVRVYSGHVEAGAQVVNSTKGKKERIGKLFQMHANKEMPVEGATAGHIYAAIGLKDTTTGDTLCDANNQIVLESMSFPEPVISVAIEPNTKGDQEKLSTAIQKLSAEDPTFQVSLNEDTGQTIIAGMGELHLDILVDRMRREFKVEANVGKPQVAYRETIKRAVERLDYTHKKQTGGSGQFAKIQIAIEPMDTASGELYAFENKVTGGRVPREYIPSVDAGIQDALNDGVLAGYPVVGIKATLIDGASHDVDSSEMAFKIAGRMAFKEAARKANPVLLEPLMDVEVRTPEEYMGDVIGDLNARRGQMQSMEDAAGVKVIRAHVPLSGMFGYIGDLRSKTQGRAVYSMTFNSYAEVPKAVADEIIQKTRGE.

Positions 10-290 (NKVRNIGIMA…AVVDFLPNPL (281 aa)) constitute a tr-type G domain. Residues 19–26 (AHIDAGKT), 83–87 (DTPGH), and 137–140 (NKMD) each bind GTP.

Belongs to the TRAFAC class translation factor GTPase superfamily. Classic translation factor GTPase family. EF-G/EF-2 subfamily.

The protein resides in the cytoplasm. Functionally, catalyzes the GTP-dependent ribosomal translocation step during translation elongation. During this step, the ribosome changes from the pre-translocational (PRE) to the post-translocational (POST) state as the newly formed A-site-bound peptidyl-tRNA and P-site-bound deacylated tRNA move to the P and E sites, respectively. Catalyzes the coordinated movement of the two tRNA molecules, the mRNA and conformational changes in the ribosome. This Paenarthrobacter aurescens (strain TC1) protein is Elongation factor G.